The primary structure comprises 1969 residues: Hybrid signal transduction histidine kinase B (1969 aa).

A compositionally biased stretch (polar residues) spans 1 to 10 (MEKSEQTNSF). Disordered regions lie at residues 1-91 (MEKS…HETK), 218-335 (KINE…KTKQ), 412-436 (QQQQQHHRHYHHHINSGGSSGSSDK), 468-505 (NNINIQAPSTPVQSRNYPLFTTQSPKNANSASKSKNKL), and 551-598 (GSGG…YNNN). Positions 11 to 55 (ESSNNNNNNIDSNINNNLENNNNKNNNNNNNNNNNNNNNNNNIEN) are enriched in low complexity. Residues 56–65 (SIDKNNKEDN) show a composition bias toward basic and acidic residues. Residues 72-86 (SHRKHRTRLKSKKGN) are compositionally biased toward basic residues. The span at 242–252 (TNSSILKSSEQ) shows a compositional bias: polar residues. The span at 280 to 292 (SSSSDEGSDNSKS) shows a compositional bias: low complexity. Residues 293–304 (QHSSVNTPTLSR) show a composition bias toward polar residues. A compositionally biased stretch (low complexity) spans 313–335 (SQQSQKQSQQQSQQPQQQNKTKQ). A compositionally biased stretch (basic residues) spans 416–425 (QHHRHYHHHI). The span at 469–492 (NINIQAPSTPVQSRNYPLFTTQSP) shows a compositional bias: polar residues. The span at 551 to 571 (GSGGGGSGGGGGGGGGGGGIG) shows a compositional bias: gly residues. Positions 574-598 (SSFLDDNNNLNNGENFKNSNSYNNN) are enriched in low complexity. The next 5 membrane-spanning stretches (helical) occupy residues 660–680 (AYILNFLNLVLFVVYLLSTIL), 684–704 (EWFIFAPGILLSVIYFFLGKI), 708–728 (MYLIAFLTISTAVAINITSII), 747–767 (LVMIMVPLLFPSIVYSIVILI), and 795–815 (FGELLRSIIIVFVILMFYTIL). Positions 967–1188 (TVSHELRTPI…TFSFTIPCGI (222 aa)) constitute a Histidine kinase domain. At H970 the chain carries Phosphohistidine; by autocatalysis. Disordered stretches follow at residues 1359–1415 (ASKD…HQLI), 1521–1563 (GIAL…TTQS), 1617–1709 (NNNF…SSHS), and 1755–1832 (QKPQ…TAAA). Gly residues predominate over residues 1373–1398 (GDGGRSLSGGGGGVGSNGNGNGGGGL). Low complexity-rich tracts occupy residues 1399–1410 (DSNISPSELSSS) and 1527–1549 (SSSKSPSIPSSSSASASALSPNS). Polar residues-rich tracts occupy residues 1554–1563 (ELGNGKTTQS) and 1626–1665 (KPSTPTFLSNQPSPATSNSPQLLQSPTTSTTGSINLSPHR). Low complexity-rich tracts occupy residues 1755–1774 (QKPQQQQQKPTTTTTTTSTQ) and 1781–1821 (KTTT…TTTT). Positions 1840–1967 (KILLVEDNFV…DILIQMIKKH (128 aa)) constitute a Response regulatory domain. Residue D1889 is modified to 4-aspartylphosphate.

Its subcellular location is the membrane. The catalysed reaction is ATP + protein L-histidine = ADP + protein N-phospho-L-histidine.. Functionally, acts in the cytokinin signal transduction pathway that regulates spore germination. Required for the maintenance of spore dormancy. Does not appear to act as a cytokinin receptor. Probably undergoes ATP-dependent autophosphorylation at a conserved histidine residue in the kinase core, which is followed by transfer of the phosphoryl group to a conserved aspartate residue in the receiver domain. The chain is Hybrid signal transduction histidine kinase B (dhkB) from Dictyostelium discoideum (Social amoeba).